Reading from the N-terminus, the 171-residue chain is MNHFELFGLPNQFELDGGLLSAQFLELQKRFHPDNFATSSERDRLLSVQKAAQINDAYQTLKNPVTRAEYILSEQGHDIRGEQTTMQDPMFLMQQMELREDLEDLLSSSDPESALFDFSENVSAMRKTQLAELKQQLESELWQEAAQSVRKLKFIDKLNQEVEKLEDKLLG.

The J domain maps to 2–74 (NHFELFGLPN…VTRAEYILSE (73 aa)).

It belongs to the HscB family. In terms of assembly, interacts with HscA and stimulates its ATPase activity.

Functionally, co-chaperone involved in the maturation of iron-sulfur cluster-containing proteins. Seems to help targeting proteins to be folded toward HscA. The protein is Co-chaperone protein HscB homolog of Aliivibrio salmonicida (strain LFI1238) (Vibrio salmonicida (strain LFI1238)).